Consider the following 227-residue polypeptide: Cysteine-rich hydrophobic domain-containing protein 1 (227 aa).

Residues 1 to 84 (MSILLPNMAE…PPRVVSEEHL (84 aa)) form a disordered region. Residues 13–23 (TISELEEEEEA) show a composition bias toward acidic residues. The span at 24-44 (ATSSSSPSSSPSSSSSSSVSG) shows a compositional bias: low complexity. Residues 45–72 (PDEDEEDEEEEEEEDEEEEDEEEEEEEV) show a composition bias toward acidic residues. The stretch at 46 to 73 (DEDEEDEEEEEEEDEEEEDEEEEEEEVP) forms a coiled coil.

The protein belongs to the CHIC family. Palmitoylated. In terms of tissue distribution, expressed moderately in the brain.

The protein localises to the cell membrane. It is found in the cytoplasmic vesicle. This chain is Cysteine-rich hydrophobic domain-containing protein 1 (Chic1), found in Mus musculus (Mouse).